Reading from the N-terminus, the 778-residue chain is Zinc finger protein 749 (778 aa).

The 94-residue stretch at 8–101 (MVFEDVAIYF…ILKDILHLAE (94 aa)) folds into the KRAB domain. Residues 152–174 (FTCTQGGKDFTASSDLLQQQVLN) form a C2H2-type 1; degenerate zinc finger. The segment at 196–218 (FNSSQGGKDFCHQHGLFEHQKTH) adopts a C2H2-type 2; degenerate zinc-finger fold. A C2H2-type 3; degenerate zinc finger spans residues 224 to 246 (YEFSECGELFRYNSNLIKYQQNH). The segment at 252 to 274 (YEGTEYGKTFIRKSNLVQHQKIH) adopts a C2H2-type 4; degenerate zinc-finger fold. 6 C2H2-type zinc fingers span residues 298 to 320 (YECT…QKTH), 326 to 348 (YECN…QKVH), 354 to 376 (YECS…QRVH), 382 to 404 (FECS…QRVH), 410 to 432 (YKCS…LKIH), and 438 to 460 (YECT…QKIH). N6-acetyllysine is present on Lys-466. C2H2-type zinc fingers lie at residues 483–505 (YTCS…QKIH) and 511–533 (YECT…EKIH). Lys-539 carries the post-translational modification N6-acetyllysine. The C2H2-type 13; degenerate zinc-finger motif lies at 556-578 (YVCSECGKAFLTQAHLDGHQKIQ). C2H2-type zinc fingers lie at residues 584–606 (YECN…QRIH), 612–634 (YKCS…QKVH), and 640–662 (YECS…QRVH). A C2H2-type 17; atypical zinc finger spans residues 668–690 (YECSNCGKFLRYRSTFIKHHKVC). The C2H2-type 18 zinc-finger motif lies at 696–718 (HECSKCRELFRTKSSLIIHQQSH). The C2H2-type 19; degenerate zinc finger occupies 751–773 (YECGESSKVFKYNSSLIKHQIIH). Glycyl lysine isopeptide (Lys-Gly) (interchain with G-Cter in SUMO2) cross-links involve residues Lys-761 and Lys-768.

This sequence belongs to the krueppel C2H2-type zinc-finger protein family.

It localises to the nucleus. In terms of biological role, may be involved in transcriptional regulation. The polypeptide is Zinc finger protein 749 (ZNF749) (Homo sapiens (Human)).